A 37-amino-acid polypeptide reads, in one-letter code: Large ribosomal subunit protein bL36 (37 aa).

Zn(2+) contacts are provided by C11, C14, C27, and H32.

The protein belongs to the bacterial ribosomal protein bL36 family. In terms of assembly, part of the 50S ribosomal subunit. Zn(2+) serves as cofactor.

In terms of biological role, binds the 23S rRNA. This chain is Large ribosomal subunit protein bL36 (rpmJ), found in Deinococcus radiodurans (strain ATCC 13939 / DSM 20539 / JCM 16871 / CCUG 27074 / LMG 4051 / NBRC 15346 / NCIMB 9279 / VKM B-1422 / R1).